Here is an 868-residue protein sequence, read N- to C-terminus: Leucine--tRNA ligase (868 aa).

Residues Pro-42–His-52 carry the 'HIGH' region motif. The short motif at Lys-627 to Ser-631 is the 'KMSKS' region element. Lys-630 lines the ATP pocket.

This sequence belongs to the class-I aminoacyl-tRNA synthetase family.

Its subcellular location is the cytoplasm. The catalysed reaction is tRNA(Leu) + L-leucine + ATP = L-leucyl-tRNA(Leu) + AMP + diphosphate. This is Leucine--tRNA ligase from Pseudomonas savastanoi pv. phaseolicola (strain 1448A / Race 6) (Pseudomonas syringae pv. phaseolicola (strain 1448A / Race 6)).